A 62-amino-acid polypeptide reads, in one-letter code: MRCVPVFIILLLLSPSAPSVDAHPMTKDDVPQASFHDDAKRTLQVPWMKRGCCARLTCCVGR.

An N-terminal signal peptide occupies residues 1-22; that stretch reads MRCVPVFIILLLLSPSAPSVDA. The propeptide occupies 23-48; it reads HPMTKDDVPQASFHDDAKRTLQVPWM. Val-60 bears the Valine amide mark.

Belongs to the conotoxin T superfamily. Contains 2 disulfide bonds that can be either 'C1-C3, C2-C4' or 'C1-C4, C2-C3', since these disulfide connectivities have been observed for conotoxins with cysteine framework V (for examples, see AC P0DQQ7 and AC P81755). Expressed by the venom duct.

Its subcellular location is the secreted. This is Conotoxin Qc5.1 from Conus quercinus (Oak cone).